A 556-amino-acid polypeptide reads, in one-letter code: Carotenoid-cleaving dioxygenase, mitochondrial (556 aa).

The Fe cation site is built by histidine 203, histidine 263, histidine 334, and histidine 550.

The protein belongs to the carotenoid oxygenase family. Fe(2+) is required as a cofactor.

The protein resides in the mitochondrion. It carries out the reaction all-trans-beta-carotene + O2 = beta-ionone + all-trans-10'-apo-beta-carotenal. The enzyme catalyses 5-cis-lycopene + O2 = 5-cis-10'-apo-lycopenal + (3E,5E)-6,10-dimethylundeca-3,5,9-trien-2-one. The catalysed reaction is 13-cis-lycopene + O2 = 13-cis-10'-apo-lycopenal + (3E,5E)-6,10-dimethylundeca-3,5,9-trien-2-one. It catalyses the reaction lutein + O2 = (3R,6R)-hydroxy-alpha-ionone + (3R)-3-hydroxy-10'-apo-beta-carotenal. It carries out the reaction lutein + O2 = (3R,6R)-3-hydroxy-10'-apo-alpha-carotenal + (3R)-hydroxy-beta-ionone. The enzyme catalyses all-trans-zeaxanthin + 2 O2 = 4,9-dimethyldodeca-2,4,6,8,10-pentaenedial + 2 (3R)-hydroxy-beta-ionone. The catalysed reaction is all-trans-zeaxanthin + O2 = (3R)-3-hydroxy-10'-apo-beta-carotenal + (3R)-hydroxy-beta-ionone. It catalyses the reaction beta-cryptoxanthin + O2 = all-trans-10'-apo-beta-carotenal + (3R)-hydroxy-beta-ionone. It carries out the reaction all-trans-10'-apo-beta-carotenal + O2 = beta-ionone + 4,9-dimethyldodeca-2,4,6,8,10-pentaenedial. The enzyme catalyses (3R)-3-hydroxy-10'-apo-beta-carotenal + O2 = 4,9-dimethyldodeca-2,4,6,8,10-pentaenedial + (3R)-hydroxy-beta-ionone. The catalysed reaction is (3R,6R)-3-hydroxy-10'-apo-alpha-carotenal + O2 = (3R,6R)-hydroxy-alpha-ionone + 4,9-dimethyldodeca-2,4,6,8,10-pentaenedial. Broad specificity mitochondrial dioxygenase that mediates the asymmetric oxidative cleavage of carotenoids. Cleaves carotenes (pure hydrocarbon carotenoids) such as all-trans-beta-carotene and lycopene as well as xanthophylls (oxygenated carotenoids) such as zeaxanthin, lutein and beta-cryptoxanthin at both the 9,10 and the 9',10' carbon-carbon double bond. Through its function in carotenoids metabolism regulates oxidative stress and the production of important signaling molecules. This Macaca fascicularis (Crab-eating macaque) protein is Carotenoid-cleaving dioxygenase, mitochondrial.